A 651-amino-acid polypeptide reads, in one-letter code: MBT domain-containing protein 1 (651 aa).

The disordered stretch occupies residues 21–55; sequence SFGMFDGYDSCSEDTSSSSSSDESEEEVAPLPSSL. The span at 29–41 shows a compositional bias: low complexity; the sequence is DSCSEDTSSSSSS. Residues 68–103 form an FCS-type zinc finger; that stretch reads PDGKSGMATCEMCGMVGVRDAFYSKTKRFCSVSCSR. Positions 77, 80, 97, and 101 each coordinate Zn(2+). MBT repeat units lie at residues 164–268, 276–373, 374–479, and 487–583; these read FSWG…LVPP, TNWK…IGHR, FKRT…LTPP, and FKWF…LQPP. Disordered regions lie at residues 581–610 and 629–651; these read QPPA…YKGH and TFLQ…KQEP. The segment covering 586–596 has biased composition (low complexity); sequence QSNKDSQSNIS. The span at 597-610 shows a compositional bias: basic residues; sequence KQKKKSKSQPYKGH. Positions 632–643 are enriched in polar residues; sequence QGASDQESNGSG.

Monomer. Component of the NuA4 histone acetyltransferase complex.

Its subcellular location is the nucleus. It is found in the chromosome. Functionally, chromatin reader component of the NuA4 histone acetyltransferase complex, a multiprotein complex involved in transcriptional activation of select genes principally by acetylation of nucleosomal histones H4 and H2A. The NuA4 complex plays a direct role in repair of DNA double-strand breaks (DSBs) by promoting homologous recombination (HR). MBTD1 specifically recognizes and binds monomethylated and dimethylated 'Lys-20' on histone H4 (H4K20me1 and H4K20me2, respectively). In the NuA4 complex, MBTD1 promotes recruitment of the complex to H4K20me marks by competing with TP53BP1 for binding to H4K20me. Following recruitment to H4K20me at DNA breaks, the NuA4 complex catalyzes acetylation of 'Lys-15' on histone H2A (H2AK15), blocking the ubiquitination mark required for TP53BP1 localization at DNA breaks, thereby promoting homologous recombination (HR). This Xenopus tropicalis (Western clawed frog) protein is MBT domain-containing protein 1.